Reading from the N-terminus, the 860-residue chain is Alanine--tRNA ligase (860 aa).

Zn(2+)-binding residues include His553, His557, Cys655, and His659.

This sequence belongs to the class-II aminoacyl-tRNA synthetase family. It depends on Zn(2+) as a cofactor.

The protein localises to the cytoplasm. It catalyses the reaction tRNA(Ala) + L-alanine + ATP = L-alanyl-tRNA(Ala) + AMP + diphosphate. Catalyzes the attachment of alanine to tRNA(Ala) in a two-step reaction: alanine is first activated by ATP to form Ala-AMP and then transferred to the acceptor end of tRNA(Ala). Also edits incorrectly charged Ser-tRNA(Ala) and Gly-tRNA(Ala) via its editing domain. The chain is Alanine--tRNA ligase from Legionella pneumophila (strain Lens).